The following is a 105-amino-acid chain: Probable tetrachloroethene reductive dehalogenase membrane anchor protein (105 aa).

Transmembrane regions (helical) follow at residues 3–23 (IYDV…QYGI), 35–55 (IPLQ…LAWG), and 66–86 (AIGM…IITY).

It belongs to the PceB family.

Its subcellular location is the cell membrane. Its function is as follows. May act as a membrane anchor for the tetrachloroethene reductive dehalogenase PceA. This chain is Probable tetrachloroethene reductive dehalogenase membrane anchor protein, found in Desulfitobacterium hafniense (Desulfitobacterium frappieri).